Here is a 496-residue protein sequence, read N- to C-terminus: Alanine aminotransferase 1 (496 aa).

The residue at position 2 (alanine 2) is an N-acetylalanine. Threonine 22 carries the post-translational modification Phosphothreonine. N6-(pyridoxal phosphate)lysine is present on lysine 314.

The protein belongs to the class-I pyridoxal-phosphate-dependent aminotransferase family. Alanine aminotransferase subfamily. In terms of assembly, homodimer. Pyridoxal 5'-phosphate is required as a cofactor.

The protein resides in the cytoplasm. It carries out the reaction L-alanine + 2-oxoglutarate = pyruvate + L-glutamate. It functions in the pathway amino-acid degradation; L-alanine degradation via transaminase pathway; pyruvate from L-alanine: step 1/1. Functionally, catalyzes the reversible transamination between alanine and 2-oxoglutarate to form pyruvate and glutamate. Participates in cellular nitrogen metabolism and also in liver gluconeogenesis starting with precursors transported from skeletal muscles. This is Alanine aminotransferase 1 (GPT) from Bos taurus (Bovine).